A 260-amino-acid polypeptide reads, in one-letter code: MAPKKKGGGKKKKKDDGAEPPHDGSWERAVESGTWEKPVTDLPDANTWPTWGALRERVLTACREIKINNTASLRDAFANELVKLSPPELTLIDLRGSSNLHNFNLSPMTTCPKLTDLDLSECAGLDYVLLQSQTVRSVNLRKNPAITKALIHCPRLNKLSITDCPALETLMLWTDELTELDLTGCNNLSVVKLQCPNLLDSKIPPLKVAPQHVKPSHPPIASLLKENLTTAAHKAAADKEALAGVKDTSDSIIPHVFRPF.

Over residues 1–13 (MAPKKKGGGKKKK) the composition is skewed to basic residues. Positions 1-43 (MAPKKKGGGKKKKKDDGAEPPHDGSWERAVESGTWEKPVTDLP) are disordered. The span at 14-30 (KDDGAEPPHDGSWERAV) shows a compositional bias: basic and acidic residues.

Belongs to the DRC6 family. As to quaternary structure, component of the nexin-dynein regulatory complex (N-DRC).

It is found in the cytoplasm. The protein localises to the cytoskeleton. Its subcellular location is the flagellum axoneme. Functionally, component of the nexin-dynein regulatory complex (N-DRC), a key regulator of ciliary/flagellar motility which maintains the alignment and integrity of the distal axoneme and regulates microtubule sliding in motile axonemes. The sequence is that of Dynein regulatory complex subunit 6 from Chlamydomonas reinhardtii (Chlamydomonas smithii).